A 481-amino-acid chain; its full sequence is Cis-aconitate decarboxylase (481 aa).

Residues 462-481 (SPPEVASNSPACNNSITNLS) form a disordered region. Positions 467-481 (ASNSPACNNSITNLS) are enriched in polar residues.

The protein belongs to the PrpD family. In terms of assembly, homodimer. As to expression, expressed in LPS-tolerized macrophages (at protein level). Expressed in peripheral blood mononuclear cells (PBMCs), microglia and macrophage cells.

It localises to the mitochondrion. The enzyme catalyses cis-aconitate + H(+) = itaconate + CO2. Cis-aconitate decarboxylase that catalyzes production of itaconate and is involved in the inhibition of the inflammatory response. Acts as a negative regulator of the Toll-like receptors (TLRs)-mediated inflammatory innate response by stimulating the tumor necrosis factor alpha-induced protein TNFAIP3 expression via reactive oxygen species (ROS) in LPS-tolerized macrophages. Involved in antimicrobial response of innate immune cells; ACOD1-mediated itaconic acid production contributes to the antimicrobial activity of macrophages by generating itaconate, leading to alkylation of proteins, such as TFEB. Involved in antiviral response following infection by flavivirus in neurons: ACOD1-mediated itaconate production inhibits the activity of succinate dehydrogenase, generating a metabolic state in neurons that suppresses replication of viral genomes. Plays a role in the embryo implantation. This is Cis-aconitate decarboxylase from Homo sapiens (Human).